A 450-amino-acid polypeptide reads, in one-letter code: Plasminogen-binding protein PgbA (450 aa).

3 stretches are compositionally biased toward basic and acidic residues: residues 262 to 273, 284 to 310, and 317 to 362; these read EIKQEAIKEPKK, LEEKNYQKAERKFDAKEERRRSRDERK, and KAME…REIN. The segment at 262–450 is disordered; the sequence is EIKQEAIKEP…RRKALEMNKK (189 aa). The span at 363–386 shows a compositional bias: polar residues; that stretch reads QESANEPSSENNATLKDTENTSVL. Residues 389-450 show a composition bias toward basic and acidic residues; sequence SAAKKEAPKP…RRKALEMNKK (62 aa).

The protein localises to the cell surface. In terms of biological role, binds plasminogen, specifically, and in a concentration and lysine-dependent manner. Plasminogen is the precursor of plasmin, a serine protease that cleaves fibrin, fibronectin, laminin and vitronectin. Acquisition of plasminogen/plasmin could enable H.pylori to degrade host components. The chain is Plasminogen-binding protein PgbA (pgbA) from Helicobacter pylori (strain J99 / ATCC 700824) (Campylobacter pylori J99).